The following is a 435-amino-acid chain: Chaperone SurA (435 aa).

An N-terminal signal peptide occupies residues 1–24 (MRLRSFAFLGFMLLVAMAPSMASA). 2 PpiC domains span residues 173–274 (DTAY…KLID) and 286–385 (VTEN…ELED).

The protein resides in the periplasm. The catalysed reaction is [protein]-peptidylproline (omega=180) = [protein]-peptidylproline (omega=0). Its function is as follows. Chaperone involved in the correct folding and assembly of outer membrane proteins. Recognizes specific patterns of aromatic residues and the orientation of their side chains, which are found more frequently in integral outer membrane proteins. May act in both early periplasmic and late outer membrane-associated steps of protein maturation. This is Chaperone SurA from Chromohalobacter salexigens (strain ATCC BAA-138 / DSM 3043 / CIP 106854 / NCIMB 13768 / 1H11).